The following is a 254-amino-acid chain: Alcohol dehydrogenase 1 (254 aa).

Position 10–33 (10–33 (FVAGLGGIGLDTSREIVKSGPKNL)) interacts with NAD(+). Ser-138 contacts substrate. Residue Tyr-151 is the Proton acceptor of the active site.

Belongs to the short-chain dehydrogenases/reductases (SDR) family. Homodimer.

It catalyses the reaction a primary alcohol + NAD(+) = an aldehyde + NADH + H(+). The catalysed reaction is a secondary alcohol + NAD(+) = a ketone + NADH + H(+). The chain is Alcohol dehydrogenase 1 (Adh1) from Drosophila hydei (Fruit fly).